Here is a 63-residue protein sequence, read N- to C-terminus: Alpha-conotoxin-like PuSG1.2 (63 aa).

Positions 1–21 (MRCLALLVVTLLLFTATATTG) are cleaved as a signal peptide. The propeptide occupies 22 to 43 (ASNGMNAAASGEAPDSISLAVR). Disulfide bonds link Cys-46–Cys-52 and Cys-47–Cys-60. Positions 48-50 (PDP) are lacks the Ser-Xaa-Pro motif that is crucial for potent interaction with nAChR.

The protein belongs to the conotoxin A superfamily. As to expression, expressed by the salivary gland.

It is found in the secreted. Alpha-conopeptides-like may act on postsynaptic membranes, they bind to the nicotinic acetylcholine receptors (nAChR) and thus inhibit them. Has possibly a distinct nAChR binding mode from other alpha-conotoxins, due to a different three residue motif (lacks the Ser-Xaa-Pro motif). This Conus pulicarius (Flea-bitten cone) protein is Alpha-conotoxin-like PuSG1.2.